We begin with the raw amino-acid sequence, 668 residues long: Penicillin-binding protein 3 (668 aa).

The chain crosses the membrane as a helical span at residues leucine 7–lysine 23. The Acyl-ester intermediate role is filled by serine 410.

Belongs to the transpeptidase family.

It is found in the cell membrane. Its subcellular location is the forespore inner membrane. The protein resides in the forespore outer membrane. It localises to the membrane raft. The catalysed reaction is Preferential cleavage: (Ac)2-L-Lys-D-Ala-|-D-Ala. Also transpeptidation of peptidyl-alanyl moieties that are N-acyl substituents of D-alanine.. It functions in the pathway cell wall biogenesis; peptidoglycan biosynthesis. In terms of biological role, penicillin-binding proteins (PBPs) function in the late steps of murein biosynthesis. Probably required for both cortical and vegetative peptidoglycan synthesis. Although not usually required for cell division, in the absence of PBP 2B (pbpB) it becomes essential. Confers resistance to oxacillin and cephalexin. In Bacillus subtilis (strain 168), this protein is Penicillin-binding protein 3.